Here is a 303-residue protein sequence, read N- to C-terminus: D-alanine--D-alanine ligase (303 aa).

Positions 103–293 (KTLFIKGGIP…FAQLCEKILE (191 aa)) constitute an ATP-grasp domain. Residue 130–179 (PYVIKPSRQGSSIGIEFVYDIKELDQAIKKSTQYDHVVLAEALITGKELT) coordinates ATP. Residues Asp-247, Glu-260, and Asn-262 each contribute to the Mg(2+) site.

Belongs to the D-alanine--D-alanine ligase family. The cofactor is Mg(2+). Requires Mn(2+) as cofactor.

The protein resides in the cytoplasm. The catalysed reaction is 2 D-alanine + ATP = D-alanyl-D-alanine + ADP + phosphate + H(+). It participates in cell wall biogenesis; peptidoglycan biosynthesis. Its function is as follows. Cell wall formation. The protein is D-alanine--D-alanine ligase of Methylacidiphilum infernorum (isolate V4) (Methylokorus infernorum (strain V4)).